The sequence spans 233 residues: Putative nosiheptide resistance regulatory protein (233 aa).

Residues 93-112 (RKAARQAADYSRPMIEQAVA) constitute a DNA-binding region (H-T-H motif). Positions 190–233 (PPEATEVPESGRLTSVDGSAEAVLDPEVQAKEAAEEAAKRDDQA) are disordered. The segment covering 217 to 233 (VQAKEAAEEAAKRDDQA) has biased composition (basic and acidic residues).

Seems to be involved in the regulation of nhs expression. This is Putative nosiheptide resistance regulatory protein from Streptomyces actuosus.